Reading from the N-terminus, the 372-residue chain is Carbamoyl phosphate synthase small chain (372 aa).

The CPSase stretch occupies residues 1-182 (MTLYCKRGYK…PKAPIVHLGN (182 aa)). Positions 53, 234, and 236 each coordinate L-glutamine. One can recognise a Glutamine amidotransferase type-1 domain in the interval 186–372 (TIVVVDCGVK…KFKKMVSRNA (187 aa)). Residue Cys-262 is the Nucleophile of the active site. Residues Leu-263, Gln-266, Asn-304, Gly-306, and Tyr-307 each coordinate L-glutamine. Active-site residues include His-347 and Glu-349.

This sequence belongs to the CarA family. Composed of two chains; the small (or glutamine) chain promotes the hydrolysis of glutamine to ammonia, which is used by the large (or ammonia) chain to synthesize carbamoyl phosphate. Tetramer of heterodimers (alpha,beta)4.

It carries out the reaction hydrogencarbonate + L-glutamine + 2 ATP + H2O = carbamoyl phosphate + L-glutamate + 2 ADP + phosphate + 2 H(+). The enzyme catalyses L-glutamine + H2O = L-glutamate + NH4(+). Its pathway is amino-acid biosynthesis; L-arginine biosynthesis; carbamoyl phosphate from bicarbonate: step 1/1. It participates in pyrimidine metabolism; UMP biosynthesis via de novo pathway; (S)-dihydroorotate from bicarbonate: step 1/3. Functionally, small subunit of the glutamine-dependent carbamoyl phosphate synthetase (CPSase). CPSase catalyzes the formation of carbamoyl phosphate from the ammonia moiety of glutamine, carbonate, and phosphate donated by ATP, constituting the first step of 2 biosynthetic pathways, one leading to arginine and/or urea and the other to pyrimidine nucleotides. The small subunit (glutamine amidotransferase) binds and cleaves glutamine to supply the large subunit with the substrate ammonia. The protein is Carbamoyl phosphate synthase small chain of Sulfurisphaera tokodaii (strain DSM 16993 / JCM 10545 / NBRC 100140 / 7) (Sulfolobus tokodaii).